Reading from the N-terminus, the 424-residue chain is Glutamate-1-semialdehyde 2,1-aminomutase (424 aa).

Residue K263 is modified to N6-(pyridoxal phosphate)lysine.

The protein belongs to the class-III pyridoxal-phosphate-dependent aminotransferase family. HemL subfamily. In terms of assembly, homodimer. The cofactor is pyridoxal 5'-phosphate.

It is found in the cytoplasm. The enzyme catalyses (S)-4-amino-5-oxopentanoate = 5-aminolevulinate. The protein operates within porphyrin-containing compound metabolism; protoporphyrin-IX biosynthesis; 5-aminolevulinate from L-glutamyl-tRNA(Glu): step 2/2. This Campylobacter jejuni subsp. doylei (strain ATCC BAA-1458 / RM4099 / 269.97) protein is Glutamate-1-semialdehyde 2,1-aminomutase.